The primary structure comprises 218 residues: Cell division protein SepF (218 aa).

The segment at 24–115 (EDVTASTDNV…IANRREQYQQ (92 aa)) is disordered. Residues 28–43 (ASTDNVIPRSQQSVRA) show a composition bias toward polar residues. A compositionally biased stretch (basic and acidic residues) spans 47-63 (PKQEPRNNHVQQDHQAR).

It belongs to the SepF family. As to quaternary structure, homodimer. Interacts with FtsZ.

The protein resides in the cytoplasm. Cell division protein that is part of the divisome complex and is recruited early to the Z-ring. Probably stimulates Z-ring formation, perhaps through the cross-linking of FtsZ protofilaments. Its function overlaps with FtsA. In Streptococcus pyogenes serotype M4 (strain MGAS10750), this protein is Cell division protein SepF.